A 210-amino-acid polypeptide reads, in one-letter code: ATP-dependent Clp protease proteolytic subunit (210 aa).

The active-site Nucleophile is the Ser-106. His-131 is an active-site residue.

Belongs to the peptidase S14 family. As to quaternary structure, fourteen ClpP subunits assemble into 2 heptameric rings which stack back to back to give a disk-like structure with a central cavity, resembling the structure of eukaryotic proteasomes.

It localises to the cytoplasm. It carries out the reaction Hydrolysis of proteins to small peptides in the presence of ATP and magnesium. alpha-casein is the usual test substrate. In the absence of ATP, only oligopeptides shorter than five residues are hydrolyzed (such as succinyl-Leu-Tyr-|-NHMec, and Leu-Tyr-Leu-|-Tyr-Trp, in which cleavage of the -Tyr-|-Leu- and -Tyr-|-Trp bonds also occurs).. Its function is as follows. Cleaves peptides in various proteins in a process that requires ATP hydrolysis. Has a chymotrypsin-like activity. Plays a major role in the degradation of misfolded proteins. In Azospirillum brasilense, this protein is ATP-dependent Clp protease proteolytic subunit.